The following is a 430-amino-acid chain: tRNA(Ile)-lysidine synthase (430 aa).

27 to 32 (SGGSDS) serves as a coordination point for ATP.

This sequence belongs to the tRNA(Ile)-lysidine synthase family.

It localises to the cytoplasm. The catalysed reaction is cytidine(34) in tRNA(Ile2) + L-lysine + ATP = lysidine(34) in tRNA(Ile2) + AMP + diphosphate + H(+). Functionally, ligates lysine onto the cytidine present at position 34 of the AUA codon-specific tRNA(Ile) that contains the anticodon CAU, in an ATP-dependent manner. Cytidine is converted to lysidine, thus changing the amino acid specificity of the tRNA from methionine to isoleucine. This Rickettsia bellii (strain OSU 85-389) protein is tRNA(Ile)-lysidine synthase.